Here is a 358-residue protein sequence, read N- to C-terminus: NADH-quinone oxidoreductase subunit H (358 aa).

The next 8 helical transmembrane spans lie at 29-49 (LIKI…LTLW), 95-115 (GLFY…WAVI), 130-150 (LLLV…AGWA), 176-196 (FCFL…IVAV), 206-226 (GLGF…VYLI), 258-280 (GFAI…AVVM), 297-317 (GWIW…WIRA), and 334-354 (IFIP…LSPW).

Belongs to the complex I subunit 1 family. In terms of assembly, NDH-1 is composed of 14 different subunits. Subunits NuoA, H, J, K, L, M, N constitute the membrane sector of the complex.

It is found in the cell inner membrane. It catalyses the reaction a quinone + NADH + 5 H(+)(in) = a quinol + NAD(+) + 4 H(+)(out). Its function is as follows. NDH-1 shuttles electrons from NADH, via FMN and iron-sulfur (Fe-S) centers, to quinones in the respiratory chain. The immediate electron acceptor for the enzyme in this species is believed to be ubiquinone. Couples the redox reaction to proton translocation (for every two electrons transferred, four hydrogen ions are translocated across the cytoplasmic membrane), and thus conserves the redox energy in a proton gradient. This subunit may bind ubiquinone. The chain is NADH-quinone oxidoreductase subunit H from Acidovorax sp. (strain JS42).